The following is a 227-amino-acid chain: 2-C-methyl-D-erythritol 4-phosphate cytidylyltransferase (227 aa).

This sequence belongs to the IspD/TarI cytidylyltransferase family. IspD subfamily.

The enzyme catalyses 2-C-methyl-D-erythritol 4-phosphate + CTP + H(+) = 4-CDP-2-C-methyl-D-erythritol + diphosphate. It functions in the pathway isoprenoid biosynthesis; isopentenyl diphosphate biosynthesis via DXP pathway; isopentenyl diphosphate from 1-deoxy-D-xylulose 5-phosphate: step 2/6. In terms of biological role, catalyzes the formation of 4-diphosphocytidyl-2-C-methyl-D-erythritol from CTP and 2-C-methyl-D-erythritol 4-phosphate (MEP). In Lachnospira eligens (strain ATCC 27750 / DSM 3376 / VPI C15-48 / C15-B4) (Eubacterium eligens), this protein is 2-C-methyl-D-erythritol 4-phosphate cytidylyltransferase.